A 185-amino-acid polypeptide reads, in one-letter code: Ribonuclease HII (185 aa).

The RNase H type-2 domain occupies 1–185; it reads MIILGIDEAG…KSYKPIQLLL (185 aa). Positions 7, 8, and 99 each coordinate a divalent metal cation.

Belongs to the RNase HII family. It depends on Mn(2+) as a cofactor. Mg(2+) is required as a cofactor.

The protein resides in the cytoplasm. It carries out the reaction Endonucleolytic cleavage to 5'-phosphomonoester.. Its function is as follows. Endonuclease that specifically degrades the RNA of RNA-DNA hybrids. The protein is Ribonuclease HII of Francisella philomiragia subsp. philomiragia (strain ATCC 25017 / CCUG 19701 / FSC 153 / O#319-036).